The sequence spans 2078 residues: Nascent polypeptide-associated complex subunit alpha, muscle-specific form (2078 aa).

Disordered stretches follow at residues 1–21, 37–96, 595–614, and 732–1944; these read MPGEATETVPATEQELPQPQA, ALGQ…LGTA, LGEPLPIGKPASSMTSPLGV, and KSVP…KAMS. 2 stretches are compositionally biased toward polar residues: residues 9–21 and 60–75; these read VPATEQELPQPQA and AANQASPFPSPSTIAS. Over residues 775–786 the composition is skewed to low complexity; the sequence is SGASATASSKGT. Residues 837–847 are compositionally biased toward polar residues; the sequence is PENSLSFQGSK. Phosphoserine is present on serine 917. Over residues 933-1020 the composition is skewed to pro residues; it reads SPSPKGAPTP…PPAVTPPSPK (88 aa). Residues 1045-1067 show a composition bias toward low complexity; it reads GSPAATPLPKGAPTTPAATLPSP. Residues 1080–1113 are compositionally biased toward pro residues; it reads PTPPAATPPSPKGGPATPSPKGAPMPPAATPPSP. The segment covering 1114 to 1130 has biased composition (low complexity); it reads KGGLATPPHKGAPTTPA. Pro residues-rich tracts occupy residues 1131–1147 and 1154–1170; these read ATPPSPKGGLATPPPKG. Serine 1181 is modified (phosphoserine). Low complexity-rich tracts occupy residues 1183–1199, 1206–1222, and 1229–1245; these read KGGLATPSPKGAPTTPA. Pro residues-rich tracts occupy residues 1246-1270 and 1292-1344; these read ATPPSPKGGPATPPPKGAPTPPAAT and VTPP…PSPK. Low complexity predominate over residues 1345–1366; that stretch reads GTPTLPATTPSSKGGPTTPSSK. Serine 1397 and serine 1474 each carry phosphoserine. Residues 1470–1481 are compositionally biased toward pro residues; that stretch reads VTPPSPKEPPAP. Over residues 1485–1507 the composition is skewed to low complexity; the sequence is ATSSSPKKAPATPAPMGAPTLPA. Pro residues predominate over residues 1611–1625; sequence KEAPTPPAVTPPSPE. The span at 1626 to 1637 shows a compositional bias: low complexity; the sequence is KGPATPAPKGTP. Polar residues predominate over residues 1647–1656; sequence LKDSPTSPAS. Residues 1744–1756 are compositionally biased toward basic and acidic residues; sequence DSSKTAKGKDASH. Residues 1794–1811 are compositionally biased toward pro residues; that stretch reads PSPPVSLPLAPSPVPTLP. Positions 1841–1845 match the PXLXP motif; it reads LPLIP. The segment covering 1876 to 1891 has biased composition (polar residues); that stretch reads SAKQPVTKNNKGSGTE. The segment covering 1892–1905 has biased composition (acidic residues); the sequence is SDSDESVPELEEQD. A Phosphoserine; by ILK1 modification is found at serine 1906. Over residues 1907–1920 the composition is skewed to low complexity; the sequence is TQATTQQAQLAAAA. The tract at residues 1932-1943 is required for DNA-binding; the sequence is QSRSEKKARKAM. The 66-residue stretch at 1933 to 1998 folds into the NAC-A/B domain; the sequence is SRSEKKARKA…AKIEDLSQQA (66 aa). Serine 1995 carries the phosphoserine modification. At lysine 2005 the chain carries N6-acetyllysine; alternate. Residue lysine 2005 forms a Glycyl lysine isopeptide (Lys-Gly) (interchain with G-Cter in SUMO2); alternate linkage. Threonine 2022 carries the phosphothreonine; by GSK3-beta modification. Threonine 2024 is modified (phosphothreonine). Phosphoserine is present on residues serine 2029, serine 2049, serine 2054, and serine 2066. One can recognise a UBA domain in the interval 2039 to 2078; sequence VEVKDIELVMSQANVSRAKAVRALKNNSNDIVNAIMELTM.

Interacts (via PXLXP motif) with the muscle-restricted histone methyltransferase SMYD1 (via MYND-type zinc finger).

The protein localises to the cytoplasm. Its subcellular location is the nucleus. In terms of biological role, cardiac- and muscle-specific transcription factor. May act to regulate the expression of genes involved in the development of myotubes. Plays a critical role in ventricular cardiomyocyte expansion and regulates postnatal skeletal muscle growth and regeneration. Involved in the organized assembly of thick and thin filaments of myofibril sarcomeres. The chain is Nascent polypeptide-associated complex subunit alpha, muscle-specific form (NACA) from Homo sapiens (Human).